We begin with the raw amino-acid sequence, 118 residues long: uncharacterized protein (118 aa).

3 helical membrane-spanning segments follow: residues 6 to 26 (ILIL…PFMV), 43 to 63 (ALSC…IHVL), and 84 to 104 (IFKV…VLVQ).

This sequence belongs to the AzlD/HI_1737/HP1330 family.

The protein resides in the cell membrane. This is an uncharacterized protein from Helicobacter pylori (strain J99 / ATCC 700824) (Campylobacter pylori J99).